The following is a 176-amino-acid chain: MTTIVSVRRENEVAMGGDGQVSLGNTVMKGNARKVRRLYNGQVIAGFAGGTADAFTLFERFEAQLEKHQGNLTRAAVELAKDWRTDRALRKLEALLAVADKTASLIITGNGDVIEPEQGLIAIGSGGPFAQAAARALLENTELSAHEIAEKALEIAGDICIYTNQNRTLEVLPIKD.

T2 is an active-site residue. Positions 157, 160, and 163 each coordinate Na(+).

The protein belongs to the peptidase T1B family. HslV subfamily. A double ring-shaped homohexamer of HslV is capped on each side by a ring-shaped HslU homohexamer. The assembly of the HslU/HslV complex is dependent on binding of ATP.

The protein resides in the cytoplasm. It carries out the reaction ATP-dependent cleavage of peptide bonds with broad specificity.. Its activity is regulated as follows. Allosterically activated by HslU binding. Its function is as follows. Protease subunit of a proteasome-like degradation complex believed to be a general protein degrading machinery. The polypeptide is ATP-dependent protease subunit HslV (Marinobacter nauticus (strain ATCC 700491 / DSM 11845 / VT8) (Marinobacter aquaeolei)).